Consider the following 194-residue polypeptide: Imidazoleglycerol-phosphate dehydratase (194 aa).

Belongs to the imidazoleglycerol-phosphate dehydratase family.

The protein resides in the cytoplasm. The catalysed reaction is D-erythro-1-(imidazol-4-yl)glycerol 3-phosphate = 3-(imidazol-4-yl)-2-oxopropyl phosphate + H2O. It functions in the pathway amino-acid biosynthesis; L-histidine biosynthesis; L-histidine from 5-phospho-alpha-D-ribose 1-diphosphate: step 6/9. The polypeptide is Imidazoleglycerol-phosphate dehydratase (Halalkalibacterium halodurans (strain ATCC BAA-125 / DSM 18197 / FERM 7344 / JCM 9153 / C-125) (Bacillus halodurans)).